The chain runs to 321 residues: Basic leucine zipper 34 (321 aa).

Positions 97 to 189 (TDDDNLHSNP…SGNRILDPKR (93 aa)) are disordered. Composition is skewed to low complexity over residues 110–133 (NNKNNNVGPTGSSSNTSTPSNSFN), 145–155 (NMNNNINNNYN), and 172–182 (SNNNSGDSSGN). Positions 186-238 (DPKRVKRILANRQSAQRSRVRKLQYISELERSVTSLQAEVSVLSPRVAFLDHQ) constitute a bZIP domain. The segment at 188-207 (KRVKRILANRQSAQRSRVRK) is basic motif. Residues 214 to 235 (LERSVTSLQAEVSVLSPRVAFL) are leucine-zipper.

In terms of assembly, forms heterodimers with BZIP18, BZIP43 and VIP1/BZIP51. In terms of tissue distribution, expressed in vascular tissues of leaves, stems and siliques, anthers, filaments, tapetum, mature pollen grains, pistil vascular tissues and papillar cells, and funiculi.

The protein resides in the nucleus. Its function is as follows. Transcriptional activator involved in the sporophytic control of cell wall patterning and gametophytic control of pollen development. May play a role in the control of metabolic pathways regulating cellular transport and lipid metabolism. This is Basic leucine zipper 34 from Arabidopsis thaliana (Mouse-ear cress).